The following is an 874-amino-acid chain: Alanine--tRNA ligase (874 aa).

Zn(2+) is bound by residues H563, H567, C664, and H668.

This sequence belongs to the class-II aminoacyl-tRNA synthetase family. It depends on Zn(2+) as a cofactor.

The protein resides in the cytoplasm. It catalyses the reaction tRNA(Ala) + L-alanine + ATP = L-alanyl-tRNA(Ala) + AMP + diphosphate. Its function is as follows. Catalyzes the attachment of alanine to tRNA(Ala) in a two-step reaction: alanine is first activated by ATP to form Ala-AMP and then transferred to the acceptor end of tRNA(Ala). Also edits incorrectly charged Ser-tRNA(Ala) and Gly-tRNA(Ala) via its editing domain. This is Alanine--tRNA ligase from Methylobacillus flagellatus (strain ATCC 51484 / DSM 6875 / VKM B-1610 / KT).